Consider the following 355-residue polypeptide: Anthocyanin synthase (355 aa).

Substrate is bound by residues Tyr-145 and Lys-216. A Fe2OG dioxygenase domain is found at Leu-211–Pro-310. Residue Asn-218–Tyr-220 participates in 2-oxoglutarate binding. His-235 lines the Fe cation pocket. Thr-236 provides a ligand contact to substrate. Fe cation is bound by residues Asp-237 and His-291. 2-oxoglutarate is bound by residues Arg-301 and Arg-301–Ser-303. Substrate contacts are provided by Glu-309 and Lys-344.

This sequence belongs to the iron/ascorbate-dependent oxidoreductase family. It depends on L-ascorbate as a cofactor. The cofactor is Fe(2+). In terms of tissue distribution, expressed in stems and leaves. Expressed at low levels in ovaries.

The catalysed reaction is a (2R,3S,4S)-leucoanthocyanidin + 2-oxoglutarate + O2 = a 4-H-anthocyanidin with a 3-hydroxy group + succinate + CO2 + 2 H2O. It participates in pigment biosynthesis; anthocyanin biosynthesis. Functionally, involved in anthocyanin biosynthesis by catalyzing the oxidation of leucoanthocyanidins into anthocyanidins. Required for the accumulation of anthocyanin in red-fleshed kiwifruit varieties. This Actinidia chinensis var. chinensis (Chinese soft-hair kiwi) protein is Anthocyanin synthase.